We begin with the raw amino-acid sequence, 234 residues long: MRLYLLPDDACIFPDVGEAGPDGLLAIGGDLTPERLLRAYEEGIFPWYGPGDPILWWSPDPRCVLPLDALHVPRRLMRTVRAKTFEVRLDTAFADVLEQCAATPRPGQGGTWLVPEMRAAYTRLHHLGHAHSVEAWYGGRLVGGLYGVALGGGFFGESMFHAMPDASKVAFVWLARLLVSWGFRFVDCQQTTSHMLRFGAVEMPRTDFLACLHDATRQPSRIGRWRLPQDFVPW.

The protein belongs to the L/F-transferase family.

It is found in the cytoplasm. The enzyme catalyses N-terminal L-lysyl-[protein] + L-leucyl-tRNA(Leu) = N-terminal L-leucyl-L-lysyl-[protein] + tRNA(Leu) + H(+). It catalyses the reaction N-terminal L-arginyl-[protein] + L-leucyl-tRNA(Leu) = N-terminal L-leucyl-L-arginyl-[protein] + tRNA(Leu) + H(+). The catalysed reaction is L-phenylalanyl-tRNA(Phe) + an N-terminal L-alpha-aminoacyl-[protein] = an N-terminal L-phenylalanyl-L-alpha-aminoacyl-[protein] + tRNA(Phe). Its function is as follows. Functions in the N-end rule pathway of protein degradation where it conjugates Leu, Phe and, less efficiently, Met from aminoacyl-tRNAs to the N-termini of proteins containing an N-terminal arginine or lysine. The sequence is that of Leucyl/phenylalanyl-tRNA--protein transferase from Nitratidesulfovibrio vulgaris (strain ATCC 29579 / DSM 644 / CCUG 34227 / NCIMB 8303 / VKM B-1760 / Hildenborough) (Desulfovibrio vulgaris).